Consider the following 522-residue polypeptide: Sugar carrier protein A (522 aa).

Topologically, residues 1–22 are cytoplasmic; the sequence is MAGGSLAPAGVAKERAEQYQGK. A run of 12 helical transmembrane segments spans residues 23-43, 87-107, 121-141, 144-164, 173-193, 205-225, 286-306, 322-342, 351-371, 384-404, 430-450, and 453-473; these read VTFA…IFGY, AFTS…GPIT, ISFL…MLLL, IMLG…LSEM, LNIM…MVNY, LSLG…LLLP, LVMA…IILF, ALYS…ISIA, FLLI…AIIL, SFSV…GWSW, AVNL…LCAF, and GIFL…YIFL. At 474 to 522 the chain is on the cytoplasmic side; the sequence is PETKGVPIEEMIFLWRKHWFWKKIVPGQPEVDDSRESMEMGEAVASRIK.

Belongs to the major facilitator superfamily. Sugar transporter (TC 2.A.1.1) family.

The protein localises to the membrane. The chain is Sugar carrier protein A (STA) from Ricinus communis (Castor bean).